The following is a 113-amino-acid chain: Putative pterin-4-alpha-carbinolamine dehydratase (113 aa).

Belongs to the pterin-4-alpha-carbinolamine dehydratase family.

It catalyses the reaction (4aS,6R)-4a-hydroxy-L-erythro-5,6,7,8-tetrahydrobiopterin = (6R)-L-erythro-6,7-dihydrobiopterin + H2O. The protein is Putative pterin-4-alpha-carbinolamine dehydratase of Pelodictyon phaeoclathratiforme (strain DSM 5477 / BU-1).